A 968-amino-acid polypeptide reads, in one-letter code: MPFALGQRWISDTESELGLGTVVQVEGRMVTVLFPATGENRMFSRNEAPLTRVIYNPGDTVESHEGWSLSVEELTEKDGLVVYHGIHSETGEKVSLRETLLNHNIRFNKPQDRLFAGQIDRLDRFGIRYQCQLLRHQLATSDLLGLQGPRVGLIPHQMWIAHEVGRRYAPRVLLADEVGLGKTIEAGLIIHQQLLTGRAERVLIIVPDTLRHQWLVEMLRRFNLRFSVFDEDRCVEAFADHDNPFYTEQLVICSLELLRKKKRLDQALDADWDLLVVDEAHHLEWTEEAPSRAYQVVEALSEVVPGVLLLTATPDQLGHESHFARLRLLDPDRFYDYDAFLAEENSYKDVAVAAEALAGDAKLSDAAINSLTELLSEKDIAPSIRLIQAEDIDSELQQAARSELLQELLDRHGTGRVLYRNSRASVKGFPKRIFNAYPHAMPEQYLTAARVNEMMGGRKSLEAQAAQALSPEKLYQEFEDNSASWWKFDPRVDWLIEFLKSHRSKKVLIIASGADTALSLEEALRTREGIQATVFHEGMSIIERDKAGAYFAQEEGGAQALICSEIGSEGRNFQFASHLVLFDLPLNPDLLEQRIGRLDRIGQKNDIQIHLPYLQDTAQERLLNWYHQGLNAFELTCPSGHVLYSEFAEDLLNVLVGGDEDELTNLLNHTQSRYKELKHAMEQGRDKLLEINSHGGDKAKAIVERLAQSDQDTKLIGSVIRLWDIIGVDQEDKGENSIILRPSEHMMFPTYPGLHEDGVTVTFDRDTALSRDDIALITQEHPLVQTGLDLITGSDTGTTSVAILKNKALPAGTLFLELIYMADASAPKSSQLYRYLPPTPIRVLLDKNGNDLSAKVDYTSFDKQLSAVNRHIGSKLVTASQPILHPLFAKGEEYAQTAVNELVAQAREKMTSQLTGELDRLESLKAVNPNIREEELEYLRNQMQELSTYLDASQLQLDAIRMVLVSHV.

One can recognise a Helicase ATP-binding domain in the interval 163–332 (EVGRRYAPRV…FARLRLLDPD (170 aa)). 176–183 (DEVGLGKT) lines the ATP pocket. The short motif at 278–281 (DEAH) is the DEAH box element. The Helicase C-terminal domain maps to 491 to 655 (RVDWLIEFLK…EFAEDLLNVL (165 aa)).

It belongs to the SNF2/RAD54 helicase family. RapA subfamily. As to quaternary structure, interacts with the RNAP. Has a higher affinity for the core RNAP than for the holoenzyme. Its ATPase activity is stimulated by binding to RNAP.

Transcription regulator that activates transcription by stimulating RNA polymerase (RNAP) recycling in case of stress conditions such as supercoiled DNA or high salt concentrations. Probably acts by releasing the RNAP, when it is trapped or immobilized on tightly supercoiled DNA. Does not activate transcription on linear DNA. Probably not involved in DNA repair. In Shewanella sp. (strain ANA-3), this protein is RNA polymerase-associated protein RapA.